The primary structure comprises 254 residues: 5-oxoprolinase subunit A (254 aa).

This sequence belongs to the LamB/PxpA family. In terms of assembly, forms a complex composed of PxpA, PxpB and PxpC.

It carries out the reaction 5-oxo-L-proline + ATP + 2 H2O = L-glutamate + ADP + phosphate + H(+). In terms of biological role, catalyzes the cleavage of 5-oxoproline to form L-glutamate coupled to the hydrolysis of ATP to ADP and inorganic phosphate. The polypeptide is 5-oxoprolinase subunit A (Bacillus mycoides (strain KBAB4) (Bacillus weihenstephanensis)).